We begin with the raw amino-acid sequence, 439 residues long: Xylose isomerase (439 aa).

Active-site residues include His101 and Asp104. Residues Glu232, Glu268, His271, Asp296, Asp307, Asp309, and Asp339 each contribute to the Mg(2+) site.

This sequence belongs to the xylose isomerase family. As to quaternary structure, homotetramer. Mg(2+) is required as a cofactor.

It is found in the cytoplasm. The catalysed reaction is alpha-D-xylose = alpha-D-xylulofuranose. The protein is Xylose isomerase of Yersinia pestis bv. Antiqua (strain Angola).